Here is a 142-residue protein sequence, read N- to C-terminus: Putative transcriptional regulatory protein Mevan_1098 (142 aa).

Belongs to the Tfx family.

Functionally, putative transcriptional regulator. The sequence is that of Putative transcriptional regulatory protein Mevan_1098 from Methanococcus vannielii (strain ATCC 35089 / DSM 1224 / JCM 13029 / OCM 148 / SB).